Consider the following 389-residue polypeptide: MVSVSEIRKAQRAEGPATILAIGTATPANCVEQSTYPDFYFKITNSEHKTVLKEKFQRMCDKSMIKRRYMYLTEEILKENPSLCEYMAPSLDARQDMVVVEVPRLGKEAAVKAIKEWGQPKSKITHLIFCTTSGVDMPGADYQLTKLLGLRPYVKRYMMYQQGCFAGGTVLRLAKDLAENNKGARVLVVCSEVTAVTFRGPSDTHLDSLVGQALFGDGAAALIVGSDPLPEIEKPIFEMVWTAQTIAPDSEGAIDGHLREAGLTFHLLKDVPGIVSKNINKALVEAFQPLNIDDYNSIFWIAHPGGPAILDQVEEKLGLKPEKMKATREVLSEYGNMSSACVLFILDEMRKKSAQQGLKTTGEGLDWGVLFGFGPGLTIETVVLHSVAI.

Cys164 is an active-site residue.

It belongs to the thiolase-like superfamily. Chalcone/stilbene synthases family.

The enzyme catalyses (E)-4-coumaroyl-CoA + 3 malonyl-CoA + 3 H(+) = 2',4,4',6'-tetrahydroxychalcone + 3 CO2 + 4 CoA. Its pathway is secondary metabolite biosynthesis; flavonoid biosynthesis. Its function is as follows. The primary product of this enzyme is 4,2',4',6'-tetrahydroxychalcone (also termed naringenin-chalcone or chalcone) which can under specific conditions spontaneously isomerize into naringenin. The protein is Chalcone synthase 6 (CHS6) of Pisum sativum (Garden pea).